The chain runs to 183 residues: Large ribosomal subunit protein uL5 (183 aa).

This sequence belongs to the universal ribosomal protein uL5 family. As to quaternary structure, part of the 50S ribosomal subunit; part of the 5S rRNA/L5/L18/L25 subcomplex. Contacts the 5S rRNA and the P site tRNA. Forms a bridge to the 30S subunit in the 70S ribosome.

Its function is as follows. This is one of the proteins that bind and probably mediate the attachment of the 5S RNA into the large ribosomal subunit, where it forms part of the central protuberance. In the 70S ribosome it contacts protein S13 of the 30S subunit (bridge B1b), connecting the 2 subunits; this bridge is implicated in subunit movement. Contacts the P site tRNA; the 5S rRNA and some of its associated proteins might help stabilize positioning of ribosome-bound tRNAs. The protein is Large ribosomal subunit protein uL5 of Legionella pneumophila (strain Lens).